The sequence spans 101 residues: Small ribosomal subunit protein uS10 (101 aa).

This sequence belongs to the universal ribosomal protein uS10 family. Part of the 30S ribosomal subunit.

In terms of biological role, involved in the binding of tRNA to the ribosomes. The chain is Small ribosomal subunit protein uS10 from Corynebacterium aurimucosum (strain ATCC 700975 / DSM 44827 / CIP 107346 / CN-1) (Corynebacterium nigricans).